Reading from the N-terminus, the 361-residue chain is Fructose-bisphosphate aldolase (361 aa).

Residue threonine 2 is modified to N-acetylthreonine. Arginine 56 and lysine 147 together coordinate substrate. Catalysis depends on glutamate 188, which acts as the Proton acceptor. The active-site Schiff-base intermediate with dihydroxyacetone-P is lysine 230.

It belongs to the class I fructose-bisphosphate aldolase family. In terms of assembly, homotetramer. In terms of tissue distribution, mainly expressed in the heads and partly in the thoraxes of adult flies. Expressed in all adult tissues. The Alpha-beta mRNA shows strong expression in the abdomens of adults. As to expression, mainly expressed in adult abdominal regions and is also expressed in lesser amounts in other parts of the body. The Beta-gamma mRNA is expressed in adult heads.

The catalysed reaction is beta-D-fructose 1,6-bisphosphate = D-glyceraldehyde 3-phosphate + dihydroxyacetone phosphate. Its pathway is carbohydrate degradation; glycolysis; D-glyceraldehyde 3-phosphate and glycerone phosphate from D-glucose: step 4/4. In terms of biological role, enzyme of the glycolytic pathway. Glycolysis is essential in glial cells but not in neurons; neurons rely on the citric acid cycle for their energy needs, and on lactate and alanine secreted into the hemolymph by glial cells to fuel it. May take part in developmental stage-specific or tissue -specific sugar-phosphate metabolisms. Protein acts on two substrates fructose 1,6-bisphosphate and fructose 1-phosphate (like other class I aldolases). The chain is Fructose-bisphosphate aldolase from Drosophila melanogaster (Fruit fly).